Consider the following 148-residue polypeptide: UPF0260 protein ESA_01462 (148 aa).

It belongs to the UPF0260 family.

The protein is UPF0260 protein ESA_01462 of Cronobacter sakazakii (strain ATCC BAA-894) (Enterobacter sakazakii).